We begin with the raw amino-acid sequence, 609 residues long: Alpha-glycerophosphate oxidase (609 aa).

Residue D21 to E49 participates in FAD binding.

Requires FAD as cofactor.

The protein resides in the cytoplasm. The enzyme catalyses sn-glycerol 3-phosphate + O2 = dihydroxyacetone phosphate + H2O2. It participates in membrane lipid metabolism; glycerophospholipid metabolism. The protein is Alpha-glycerophosphate oxidase (glpO) of Enterococcus casseliflavus (Enterococcus flavescens).